The sequence spans 443 residues: Histidinol dehydrogenase (443 aa).

Residues tyrosine 127, glutamine 185, and asparagine 208 each contribute to the NAD(+) site. Substrate contacts are provided by serine 234, glutamine 256, and histidine 259. Zn(2+) is bound by residues glutamine 256 and histidine 259. Catalysis depends on proton acceptor residues glutamate 323 and histidine 324. Substrate contacts are provided by histidine 324, aspartate 357, glutamate 411, and histidine 416. Aspartate 357 is a Zn(2+) binding site. Histidine 416 is a binding site for Zn(2+).

Belongs to the histidinol dehydrogenase family. Zn(2+) serves as cofactor.

The catalysed reaction is L-histidinol + 2 NAD(+) + H2O = L-histidine + 2 NADH + 3 H(+). Its pathway is amino-acid biosynthesis; L-histidine biosynthesis; L-histidine from 5-phospho-alpha-D-ribose 1-diphosphate: step 9/9. Catalyzes the sequential NAD-dependent oxidations of L-histidinol to L-histidinaldehyde and then to L-histidine. This is Histidinol dehydrogenase from Photobacterium profundum (strain SS9).